Reading from the N-terminus, the 358-residue chain is Protein Wnt-8b (358 aa).

Residues 1–23 form the signal peptide; the sequence is MFMHLEVYYYAFILMAHMKTCCG. Cys55 and Cys66 are disulfide-bonded. The N-linked (GlcNAc...) asparagine glycan is linked to Asn104. Intrachain disulfides connect Cys105/Cys113, Cys115/Cys133, Cys181/Cys195, Cys183/Cys190, Cys257/Cys295, Cys273/Cys288, Cys292/Cys334, Cys310/Cys325, Cys312/Cys322, and Cys317/Cys318. Ser187 carries O-palmitoleoyl serine lipidation. N-linked (GlcNAc...) asparagine glycans are attached at residues Asn260 and Asn279. Asn345 is a glycosylation site (N-linked (GlcNAc...) asparagine).

It belongs to the Wnt family. Palmitoleoylation is required for efficient binding to frizzled receptors. Depalmitoleoylation leads to Wnt signaling pathway inhibition. Post-translationally, proteolytic processing by tiki1 and tiki2 promotes oxidation and formation of large disulfide-bond oligomers, leading to inactivation of wnt8b. In terms of tissue distribution, hindbrain r1, 2 and 5.

Its subcellular location is the secreted. The protein resides in the extracellular space. It is found in the extracellular matrix. Functionally, ligand for fzd8a, a member of the G-protein coupled frizzled receptor family. May play a role in the establishment of polarity in the nervous system. Involved in canonical Wnt signaling pathway. During embryonic development, required for the acquisition of caudal diencephalic fate. Antagonizes eye specification. The polypeptide is Protein Wnt-8b (wnt8b) (Danio rerio (Zebrafish)).